Reading from the N-terminus, the 418-residue chain is Histidine--tRNA ligase (418 aa).

Belongs to the class-II aminoacyl-tRNA synthetase family. In terms of assembly, homodimer.

It is found in the cytoplasm. The enzyme catalyses tRNA(His) + L-histidine + ATP = L-histidyl-tRNA(His) + AMP + diphosphate + H(+). The chain is Histidine--tRNA ligase from Thermosipho africanus (strain TCF52B).